We begin with the raw amino-acid sequence, 145 residues long: uncharacterized protein (145 aa).

Residues 1 to 145 enclose the CBM3 domain; it reads LQYRAADTNA…NGQIVWGTAP (145 aa).

This is an uncharacterized protein from Paenibacillus lautus (Bacillus lautus).